The chain runs to 499 residues: MVRIQELTAALSLASVVQASWIQKRNSINACLAAADVEFHEEDSEGWDMDGTAFNLRVDYDPAAIAIPRSTEDIAAAVQCGLDAGVQISAKGGGHSYGSYGFGGEDGHLMLELDRMYRVSVDDNNVATIQGGARLGYTALELLDQGNRALSHGTCPAVGVGGHVLGGGYGFATHTHGLTLDWLIGATVVLADASIVHVSETENADLFWALRGGGGGFAIVSEFEFNTFEAPEIITTYQVTTTWNRKQHVAGLKALQDWAQNTMPRELSMRLEINANALNWEGNFFGNAKDLKKILQPIMKKAGGKSTISKLVETDWYGQINTYLYGADLNITYNYDVHEYFYANSLTAPRLSDEAIQAFVDYKFDNSSVRPGRGWWIQWDFHGGKNSALAAVSNDETAYAHRDQLWLWQFYDSIYDYENNTSPYPESGFEFMQGFVATIEDTLPEDRKGKYFNYADTTLTKEEAQKLYWRGNLEKLQAIKAKYDPEDVFGNVVSVEPIA.

The first 25 residues, 1–25 (MVRIQELTAALSLASVVQASWIQKR), serve as a signal peptide directing secretion. A disulfide bridge connects residues C31 and C80. Residues 58-230 (VDYDPAAIAI…SEFEFNTFEA (173 aa)) form the FAD-binding PCMH-type domain. Positions 95-155 (HSYGSYGFGG…GNRALSHGTC (61 aa)) form a cross-link, 6-(S-cysteinyl)-8alpha-(pros-histidyl)-FAD (His-Cys). Substrate-binding residues include Y97, T154, and R270. Residues N330 and N366 are each glycosylated (N-linked (GlcNAc...) asparagine). Residues Q378 and Q409 each contribute to the substrate site. N419 is a glycosylation site (N-linked (GlcNAc...) asparagine). Position 454 (Y454) interacts with substrate. Catalysis depends on Y454, which acts as the Proton acceptor.

It belongs to the oxygen-dependent FAD-linked oxidoreductase family. The cofactor is FAD. Post-translationally, the FAD cofactor is bound via a bicovalent 6-S-cysteinyl, 8alpha-N1-histidyl FAD linkage.

It localises to the secreted. It catalyses the reaction beta-lactose + O2 = lactobiono-1,5-lactone + H2O2. The catalysed reaction is D-cellobiose + O2 = D-cellobiono-1,5-lactone + H2O2. The enzyme catalyses D-cellotriose + O2 = D-cellotriono-1,5-lactone + H2O2. It carries out the reaction D-cellotetraose + O2 = D-cellotetraono-1,5-lactone + H2O2. It catalyses the reaction D-cellopentaose + O2 = D-cellopentaono-1,5-lactone + H2O2. The catalysed reaction is D-cellohexaose + O2 = D-cellohexaono-1,5-lactone + H2O2. Its function is as follows. Catalyzes the selective oxidation of C1 hydroxyl moieties on mono- and disaccharides with concomitant reduction of molecular oxygen to hydrogen peroxide. This results in the formation of the corresponding lactones, which typically undergo spontaneous hydrolysis. Glucooligosaccharide oxidase is able to oxidize the monosaccharide D-glucose as well as the disaccharides maltose, cellobiose, and lactose. In addition, it shows high selectivity for cello- and maltooligosaccharides, indicating that glucooligosaccharide oxidase prefers oligosaccharides with a beta-D-glucosyl unit on the reducing end and additional sugar units linked by alpha- or beta-1,4 glucosidic bonds. The sequence is that of Glucooligosaccharide oxidase (gluO) from Sarocladium strictum (Black bundle disease fungus).